The sequence spans 191 residues: MIGKLTGTLLEKNPPEVLLDCHGVGYEVNVPMSSFYNLPAVGERISLLTQFIVREDAQLLYGFATAPERQAFRALIKITGVGPRMALSILSGMSVADLAQAIARQEAARLVKVPGVGKRTAERLLLELKGKLGADLGASHGPAVSGAQADILQALLALGYNDKEAAAALKALPAQVEVSDGIKWALKALTK.

The domain I stretch occupies residues 1-64; the sequence is MIGKLTGTLL…EDAQLLYGFA (64 aa). Residues 65–140 form a domain II region; the sequence is TAPERQAFRA…KLGADLGASH (76 aa). Residues 140 to 142 are flexible linker; the sequence is HGP. The tract at residues 143-191 is domain III; that stretch reads AVSGAQADILQALLALGYNDKEAAAALKALPAQVEVSDGIKWALKALTK.

It belongs to the RuvA family. In terms of assembly, homotetramer. Forms an RuvA(8)-RuvB(12)-Holliday junction (HJ) complex. HJ DNA is sandwiched between 2 RuvA tetramers; dsDNA enters through RuvA and exits via RuvB. An RuvB hexamer assembles on each DNA strand where it exits the tetramer. Each RuvB hexamer is contacted by two RuvA subunits (via domain III) on 2 adjacent RuvB subunits; this complex drives branch migration. In the full resolvosome a probable DNA-RuvA(4)-RuvB(12)-RuvC(2) complex forms which resolves the HJ.

It is found in the cytoplasm. Functionally, the RuvA-RuvB-RuvC complex processes Holliday junction (HJ) DNA during genetic recombination and DNA repair, while the RuvA-RuvB complex plays an important role in the rescue of blocked DNA replication forks via replication fork reversal (RFR). RuvA specifically binds to HJ cruciform DNA, conferring on it an open structure. The RuvB hexamer acts as an ATP-dependent pump, pulling dsDNA into and through the RuvAB complex. HJ branch migration allows RuvC to scan DNA until it finds its consensus sequence, where it cleaves and resolves the cruciform DNA. The protein is Holliday junction branch migration complex subunit RuvA of Verminephrobacter eiseniae (strain EF01-2).